A 98-amino-acid polypeptide reads, in one-letter code: NADH-ubiquinone oxidoreductase chain 4L (98 aa).

3 helical membrane-spanning segments follow: residues 1–21 (MTLI…GLLM), 29–49 (ALLC…LTIL), and 61–81 (IILL…LVMV).

Belongs to the complex I subunit 4L family. In terms of assembly, core subunit of respiratory chain NADH dehydrogenase (Complex I) which is composed of 45 different subunits.

It localises to the mitochondrion inner membrane. The catalysed reaction is a ubiquinone + NADH + 5 H(+)(in) = a ubiquinol + NAD(+) + 4 H(+)(out). Functionally, core subunit of the mitochondrial membrane respiratory chain NADH dehydrogenase (Complex I) which catalyzes electron transfer from NADH through the respiratory chain, using ubiquinone as an electron acceptor. Part of the enzyme membrane arm which is embedded in the lipid bilayer and involved in proton translocation. The chain is NADH-ubiquinone oxidoreductase chain 4L (MT-ND4L) from Balaenoptera bonaerensis (Antarctic minke whale).